Here is a 30-residue protein sequence, read N- to C-terminus: Thylakoid lumenal 13.3 kDa protein (30 aa).

It localises to the plastid. The protein localises to the chloroplast thylakoid lumen. The polypeptide is Thylakoid lumenal 13.3 kDa protein (Spinacia oleracea (Spinach)).